Reading from the N-terminus, the 307-residue chain is UDP-N-acetylenolpyruvoylglucosamine reductase (307 aa).

In terms of domain architecture, FAD-binding PCMH-type spans 33 to 197; it reads TGGNADFYIT…LEAAFTLAPG (165 aa). The active site involves Arg-176. Ser-226 acts as the Proton donor in catalysis. The active site involves Glu-296.

It belongs to the MurB family. FAD is required as a cofactor.

It is found in the cytoplasm. The enzyme catalyses UDP-N-acetyl-alpha-D-muramate + NADP(+) = UDP-N-acetyl-3-O-(1-carboxyvinyl)-alpha-D-glucosamine + NADPH + H(+). The protein operates within cell wall biogenesis; peptidoglycan biosynthesis. Cell wall formation. The chain is UDP-N-acetylenolpyruvoylglucosamine reductase from Staphylococcus aureus (strain COL).